The following is a 453-amino-acid chain: Bifunctional protein GlmU (453 aa).

The interval 1-231 (MERTCLAVIL…EIEMTGCNTR (231 aa)) is pyrophosphorylase. Residues 10–13 (LAAG), Lys24, Gln77, 82–83 (GT), 105–107 (YGD), Gly143, Glu157, Asn172, and Asn229 contribute to the UDP-N-acetyl-alpha-D-glucosamine site. Mg(2+) is bound at residue Asp107. Asn229 is a binding site for Mg(2+). Positions 232–252 (AELAVIERFWQERRRHQLMLS) are linker. Positions 253-453 (GVTMIAPETV…ATKAAKKAKG (201 aa)) are N-acetyltransferase. UDP-N-acetyl-alpha-D-glucosamine is bound by residues Arg318 and Lys336. His348 (proton acceptor) is an active-site residue. Residues Tyr351 and Asn362 each coordinate UDP-N-acetyl-alpha-D-glucosamine. Acetyl-CoA contacts are provided by residues Ala365, 371–372 (NY), Ser390, Ser408, and Arg425.

This sequence in the N-terminal section; belongs to the N-acetylglucosamine-1-phosphate uridyltransferase family. In the C-terminal section; belongs to the transferase hexapeptide repeat family. In terms of assembly, homotrimer. Mg(2+) is required as a cofactor.

Its subcellular location is the cytoplasm. The enzyme catalyses alpha-D-glucosamine 1-phosphate + acetyl-CoA = N-acetyl-alpha-D-glucosamine 1-phosphate + CoA + H(+). It catalyses the reaction N-acetyl-alpha-D-glucosamine 1-phosphate + UTP + H(+) = UDP-N-acetyl-alpha-D-glucosamine + diphosphate. Its pathway is nucleotide-sugar biosynthesis; UDP-N-acetyl-alpha-D-glucosamine biosynthesis; N-acetyl-alpha-D-glucosamine 1-phosphate from alpha-D-glucosamine 6-phosphate (route II): step 2/2. It participates in nucleotide-sugar biosynthesis; UDP-N-acetyl-alpha-D-glucosamine biosynthesis; UDP-N-acetyl-alpha-D-glucosamine from N-acetyl-alpha-D-glucosamine 1-phosphate: step 1/1. It functions in the pathway bacterial outer membrane biogenesis; LPS lipid A biosynthesis. Catalyzes the last two sequential reactions in the de novo biosynthetic pathway for UDP-N-acetylglucosamine (UDP-GlcNAc). The C-terminal domain catalyzes the transfer of acetyl group from acetyl coenzyme A to glucosamine-1-phosphate (GlcN-1-P) to produce N-acetylglucosamine-1-phosphate (GlcNAc-1-P), which is converted into UDP-GlcNAc by the transfer of uridine 5-monophosphate (from uridine 5-triphosphate), a reaction catalyzed by the N-terminal domain. This chain is Bifunctional protein GlmU, found in Rhizobium leguminosarum bv. trifolii (strain WSM2304).